A 248-amino-acid polypeptide reads, in one-letter code: Ribonuclease PH (248 aa).

Phosphate contacts are provided by residues arginine 86 and 124-126 (GTR).

It belongs to the RNase PH family. As to quaternary structure, homohexameric ring arranged as a trimer of dimers.

It carries out the reaction tRNA(n+1) + phosphate = tRNA(n) + a ribonucleoside 5'-diphosphate. In terms of biological role, phosphorolytic 3'-5' exoribonuclease that plays an important role in tRNA 3'-end maturation. Removes nucleotide residues following the 3'-CCA terminus of tRNAs; can also add nucleotides to the ends of RNA molecules by using nucleoside diphosphates as substrates, but this may not be physiologically important. Probably plays a role in initiation of 16S rRNA degradation (leading to ribosome degradation) during starvation. The chain is Ribonuclease PH from Clostridium perfringens (strain ATCC 13124 / DSM 756 / JCM 1290 / NCIMB 6125 / NCTC 8237 / Type A).